A 156-amino-acid chain; its full sequence is Ribonuclease pancreatic (156 aa).

Residues 1–26 form the signal peptide; sequence MGLEKSLVFFPLLVLLALGWVQPCLG. Residues Lys33 and Arg36 each coordinate substrate. His38 acts as the Proton acceptor in catalysis. 4 cysteine pairs are disulfide-bonded: Cys54-Cys112, Cys68-Cys123, Cys86-Cys138, and Cys93-Cys100. 69–73 is a substrate binding site; sequence KPVNT. Residue Asn90 is glycosylated (N-linked (GlcNAc...) asparagine). Lys94 and Arg113 together coordinate substrate. The Proton donor role is filled by His147.

The protein belongs to the pancreatic ribonuclease family. In terms of assembly, monomer. Interacts with and forms tight 1:1 complexes with RNH1. Dimerization of two such complexes may occur. Interaction with RNH1 inhibits this protein. In terms of tissue distribution, pancreas.

The protein resides in the secreted. The catalysed reaction is an [RNA] containing cytidine + H2O = an [RNA]-3'-cytidine-3'-phosphate + a 5'-hydroxy-ribonucleotide-3'-[RNA].. It carries out the reaction an [RNA] containing uridine + H2O = an [RNA]-3'-uridine-3'-phosphate + a 5'-hydroxy-ribonucleotide-3'-[RNA].. Endonuclease that catalyzes the cleavage of RNA on the 3' side of pyrimidine nucleotides. Acts on single-stranded and double-stranded RNA. This chain is Ribonuclease pancreatic (RNASE1), found in Glis glis (Fat dormouse).